The chain runs to 537 residues: Serendipity locus protein alpha (537 aa).

It is found in the cytoplasm. Its subcellular location is the cell membrane. Functionally, required for the cellularization of the syncytial blastoderm embryo. Involved in the localization of the actin filaments just prior to and during plasma membrane invagination. Sry-alpha together with nullo and bnk may provide auxiliary functions, by acting both to stabilize a large and dynamic microfilament structure and regulate its functions. The polypeptide is Serendipity locus protein alpha (Sry-alpha) (Drosophila virilis (Fruit fly)).